Consider the following 382-residue polypeptide: UDP-N-acetylglucosamine--N-acetylmuramyl-(pentapeptide) pyrophosphoryl-undecaprenol N-acetylglucosamine transferase (382 aa).

Residues 17 to 19 (TAG), Asn-137, Arg-179, Ser-213, and Gln-308 each bind UDP-N-acetyl-alpha-D-glucosamine.

Belongs to the glycosyltransferase 28 family. MurG subfamily.

It is found in the cell membrane. The catalysed reaction is di-trans,octa-cis-undecaprenyl diphospho-N-acetyl-alpha-D-muramoyl-L-alanyl-D-glutamyl-meso-2,6-diaminopimeloyl-D-alanyl-D-alanine + UDP-N-acetyl-alpha-D-glucosamine = di-trans,octa-cis-undecaprenyl diphospho-[N-acetyl-alpha-D-glucosaminyl-(1-&gt;4)]-N-acetyl-alpha-D-muramoyl-L-alanyl-D-glutamyl-meso-2,6-diaminopimeloyl-D-alanyl-D-alanine + UDP + H(+). The protein operates within cell wall biogenesis; peptidoglycan biosynthesis. Cell wall formation. Catalyzes the transfer of a GlcNAc subunit on undecaprenyl-pyrophosphoryl-MurNAc-pentapeptide (lipid intermediate I) to form undecaprenyl-pyrophosphoryl-MurNAc-(pentapeptide)GlcNAc (lipid intermediate II). This is UDP-N-acetylglucosamine--N-acetylmuramyl-(pentapeptide) pyrophosphoryl-undecaprenol N-acetylglucosamine transferase from Rhodococcus opacus (strain B4).